A 352-amino-acid chain; its full sequence is C-X-C chemokine receptor type 4 (352 aa).

The segment at 1-21 (MEGISIYTSDNYTEEMGSGDY) is important for chemokine binding and signaling. Residues 1–38 (MEGISIYTSDNYTEEMGSGDYDSIKEPCFREENAHFNR) are Extracellular-facing. A Sulfotyrosine modification is found at tyrosine 7. N-linked (GlcNAc...) asparagine glycosylation occurs at asparagine 11. The residue at position 12 (tyrosine 12) is a Sulfotyrosine. Residue serine 18 is glycosylated (O-linked (Xyl...) (chondroitin sulfate) serine). Tyrosine 21 bears the Sulfotyrosine mark. Disulfide bonds link cysteine 28/cysteine 274 and cysteine 109/cysteine 186. Residues 39-63 (IFLPTIYSIIFLTGIVGNGLVILVM) form a helical membrane-spanning segment. The Cytoplasmic portion of the chain corresponds to 64–77 (GYQKKLRSMTDKYR). The helical transmembrane segment at 78-99 (LHLSVADLLFVITLPFWAVDAV) threads the bilayer. The interval 94–97 (WAVD) is chemokine binding. Residues 100–110 (ANWYFGKFLCK) lie on the Extracellular side of the membrane. A helical membrane pass occupies residues 111–130 (AVHVIYTVNLYSSVLILAFI). Residues 113–117 (HVIYT) are chemokine binding. Topologically, residues 131–154 (SLDRYLAIVHATNSQRPRKLLAEK) are cytoplasmic. An Important for signaling motif is present at residues 133–135 (DRY). The tract at residues 135 to 147 (YLAIVHATNSQRP) is involved in dimerization; when bound to chemokine. The helical transmembrane segment at 155–174 (VVYVGVWIPALLLTIPDFIF) threads the bilayer. At 175–195 (ANVSEADDRYICDRFYPNDLW) the chain is on the extracellular side. The segment at 186–190 (CDRFY) is chemokine binding, important for signaling. An involved in dimerization region spans residues 191-210 (PNDLWVVVFQFQHIMVGLIL). Residues 196–216 (VVVFQFQHIMVGLILPGIVIL) form a helical membrane-spanning segment. At 217–241 (SCYCIIISKLSHSKGHQKRKALKTT) the chain is on the cytoplasmic side. Residues 242–261 (VILILAFFACWLPYYIGISI) form a helical membrane-spanning segment. Residues 262–282 (DSFILLEIIRQGCEFENTVHK) lie on the Extracellular side of the membrane. The interval 266–268 (LLE) is involved in dimerization. Residues 283–302 (WISITEALAFFHCCLNPILY) form a helical membrane-spanning segment. Residues 303 to 352 (AFLGAKFKTSAQHALTSVSRGSSLKILSKGKRGGHSSVSTESESSSFHSS) are Cytoplasmic-facing. Phosphoserine occurs at positions 319 and 321. Serine 324 and serine 325 each carry phosphoserine; by PKC and GRK6. Residues 329–352 (LSKGKRGGHSSVSTESESSSFHSS) form a disordered region. Serine 330 carries the phosphoserine; by GRK6 modification. Lysine 331 participates in a covalent cross-link: Glycyl lysine isopeptide (Lys-Gly) (interchain with G-Cter in ubiquitin). Residues 337–352 (HSSVSTESESSSFHSS) are compositionally biased toward low complexity. Serine 339 bears the Phosphoserine; by GRK6 mark. 2 positions are modified to phosphoserine: serine 348 and serine 351.

Belongs to the G-protein coupled receptor 1 family. In terms of assembly, monomer. Can form homodimers. Interacts with CD164. Interacts with ARRB2; the interaction is dependent on the C-terminal phosphorylation of CXCR4 and allows activation of MAPK1 and MAPK3. Interacts with ARR3; the interaction is dependent on the C-terminal phosphorylation of CXCR4 and modulates calcium mobilization. Interacts with RNF113A; the interaction, enhanced by CXCL12, promotes CXCR4 ubiquitination and subsequent degradation. Interacts (via the cytoplasmic C-terminal) with ITCH (via the WW domains I and II); the interaction, enhanced by CXCL12, promotes CXCR4 ubiquitination and leads to its degradation. Interacts with extracellular ubiquitin. Interacts with DBN1; this interaction is enhanced by antigenic stimulation. Following LPS binding, may form a complex with GDF5, HSP90AA1 and HSPA8. In terms of processing, phosphorylated on agonist stimulation. Rapidly phosphorylated on serine and threonine residues in the C-terminal. Phosphorylation at Ser-324 and Ser-325 leads to recruitment of ITCH, ubiquitination and protein degradation. Post-translationally, ubiquitinated after ligand binding, leading to its degradation. Ubiquitinated by ITCH at the cell membrane on agonist stimulation. The ubiquitin-dependent mechanism, endosomal sorting complex required for transport (ESCRT), then targets CXCR4 for lysosomal degradation. This process is dependent also on prior Ser-/Thr-phosphorylation in the C-terminal of CXCR4. Also binding of ARRB1 to STAM negatively regulates CXCR4 sorting to lysosomes though modulating ubiquitination of SFR5S. Sulfation is required for efficient binding of CXCL12/SDF-1alpha and promotes its dimerization. In terms of processing, O- and N-glycosylated. N-glycosylation can mask coreceptor function. The O-glycosylation chondroitin sulfate attachment does not affect interaction with CXCL12/SDF-1alpha nor its coreceptor activity.

The protein localises to the cell membrane. It localises to the cell junction. Its subcellular location is the early endosome. The protein resides in the late endosome. It is found in the lysosome. Receptor for the C-X-C chemokine CXCL12/SDF-1 that transduces a signal by increasing intracellular calcium ion levels and enhancing MAPK1/MAPK3 activation. Involved in the AKT signaling cascade. Plays a role in regulation of cell migration, e.g. during wound healing. Acts as a receptor for extracellular ubiquitin; leading to enhanced intracellular calcium ions and reduced cellular cAMP levels. Binds bacterial lipopolysaccharide (LPS) et mediates LPS-induced inflammatory response, including TNF secretion by monocytes. Involved in hematopoiesis and in cardiac ventricular septum formation. Also plays an essential role in vascularization of the gastrointestinal tract, probably by regulating vascular branching and/or remodeling processes in endothelial cells. Involved in cerebellar development. In the CNS, could mediate hippocampal-neuron survival. This is C-X-C chemokine receptor type 4 (CXCR4) from Saimiri sciureus (Common squirrel monkey).